Consider the following 349-residue polypeptide: Protein MULTIPLE CHLOROPLAST DIVISION SITE 1 (349 aa).

The N-terminal 52 residues, 1–52 (MASIDSLQFHSLCNLQSSIGRAKLQNPSSLVIFRRRPVNLNWVQFETKGSFV), are a transit peptide targeting the chloroplast. The Chloroplast intermembrane portion of the chain corresponds to 53 to 116 (CKAIGDSSTP…VVFLMKKCSV (64 aa)). Residues 117-139 (NSIWIGVCITATVLVAAIRAYVV) traverse the membrane as a helical segment. The Stromal portion of the chain corresponds to 140-349 (RKSRDNQRAG…NSSSEETHKS (210 aa)). A disordered region spans residues 315 to 349 (QRPYKFSAKLEGENIQKNSQENHTGNSSSEETHKS). Polar residues predominate over residues 329–343 (IQKNSQENHTGNSSS).

Interacts with MIND1. Interacts with ARC6 in the chloroplast stroma and binds to FtsZ2-1 in an ARC6-dependent manner.

The protein resides in the plastid. It localises to the chloroplast inner membrane. Its function is as follows. Required for chloroplast division. Together with MIND1 and ARC3, regulates FtsZ ring positioning in chloroplasts in an ARC6-dependent manner. Determines the site of chloroplast division in concert with MIND1. Not directly involved in ring formation, but required for MIND1 and MINE1 localization to regulate FtsZ ring formation during plastidial constriction. The polypeptide is Protein MULTIPLE CHLOROPLAST DIVISION SITE 1 (Arabidopsis thaliana (Mouse-ear cress)).